The sequence spans 127 residues: uncharacterized protein (127 aa).

The stretch at 71–126 forms a coiled coil; it reads FYLREYRRIRRRIKELKNRAKYISKGEIAYNPKIMKEVEALKEKLSEIEKKIEELK.

This is an uncharacterized protein from Aquifex aeolicus (strain VF5).